We begin with the raw amino-acid sequence, 75 residues long: MVSKSLIVLLLVSVLVSTFYTSEAYPASFDDDFDALDDLDDLDLDDLLDLEPADLVLLDMWANMLDSQDFEDDFE.

An N-terminal signal peptide occupies residues 1–24 (MVSKSLIVLLLVSVLVSTFYTSEA).

The protein belongs to the non-disulfide-bridged peptide (NDBP) superfamily. In terms of tissue distribution, expressed by the venom gland.

The protein localises to the secreted. The protein is Anionic peptide of Tityus discrepans (Venezuelan scorpion).